The sequence spans 327 residues: 3' cyclic ADP-D-ribose synthase AaTIR (327 aa).

The tract at residues 10 to 120 (VALSFAGENR…GILKTIGYIN (111 aa)) is TIR domain. The active site involves lysine 229.

In terms of assembly, homodimer.

It carries out the reaction NADP(+) + H2O = ADP-D-ribose 2'-phosphate + nicotinamide + H(+). The enzyme catalyses NAD(+) = 3'cADPR + nicotinamide + H(+). In terms of biological role, NAD(+) hydrolase (NADase) that generates 3'cADPR, a cyclization variant of cyclic ADP-D-ribose (also called v2-cADPR). Also cleaves NADP(+), but does not cyclize the product. The sequence is that of 3' cyclic ADP-D-ribose synthase AaTIR from Aquimarina amphilecti.